A 429-amino-acid chain; its full sequence is D-amino acid dehydrogenase 1 (429 aa).

3–17 lines the FAD pocket; sequence VLVLGSGVIGVTSAY.

The protein belongs to the DadA oxidoreductase family. FAD is required as a cofactor.

It catalyses the reaction a D-alpha-amino acid + A + H2O = a 2-oxocarboxylate + AH2 + NH4(+). In terms of biological role, oxidative deamination of D-amino acids. This chain is D-amino acid dehydrogenase 1 (dadA1), found in Ralstonia nicotianae (strain ATCC BAA-1114 / GMI1000) (Ralstonia solanacearum).